The sequence spans 124 residues: Kalata-B1 (124 aa).

A signal peptide spans 1–22; sequence MAKFTVCLLLCLLLAAFVGAFG. Residues 23-88 constitute a propeptide that is removed on maturation; it reads SELSDSHKTT…QVFLKQLQLK (66 aa). Positions 89–117 form a cross-link, cyclopeptide (Gly-Asn); it reads GLPVCGETCVGGTCNTPGCTCSWPVCTRN. 3 cysteine pairs are disulfide-bonded: cysteine 93–cysteine 107, cysteine 97–cysteine 109, and cysteine 102–cysteine 114. Residues 118 to 124 constitute a propeptide that is removed on maturation; that stretch reads GLPSLAA.

It belongs to the cyclotide family. Moebius subfamily. Post-translationally, kalata-B1 is a cyclic peptide which occurs in three forms: with unmodified Trp-111, with Trp-111 oxidized to form oxindolylalanine and with Trp-111 oxidized to form N-formylkynurenine. Oxidation is enhanced by exposure to sunlight. In terms of tissue distribution, leaves and stems. Lower in roots.

In terms of biological role, probably participates in a plant defense mechanism. Has antibiotic activity. Has a diuretic effect. Has a uterotonic effect in humans. Active against the Gram-positive S.aureus with a minimum inhibition concentration of approximately 0.2 microM. Relatively ineffective against Gram-negative bacteria such as E.coli and P.aeruginosa. Inhibitory effect on the growth and development of larvae from H.punctigera. The unmodified form has hemolytic activity, the oxidized form lacks hemolytic activity. If the protein is linearized, hemolytic activity is lost. The chain is Kalata-B1 (OAK1) from Oldenlandia affinis.